The primary structure comprises 2871 residues: Fibrillin-1 (2871 aa).

Residues 1 to 24 (MRRGRLLEIALGFTVLLASYTSHG) form the signal peptide. Positions 25-44 (ADANLEAGNVKETRASRAKR) are excised as a propeptide. The fibrillin unique N-terminal (FUN) domain stretch occupies residues 45–81 (RGGGGHDALKGPNVCGSRYNAYCCPGWKTLPGGNQCI). The interval 45–450 (RGGGGHDALK…PPRVLPVNVT (406 aa)) is N-terminal domain. Cystine bridges form between C59-C68, C67-C80, C85-C94, C89-C100, C102-C111, C119-C129, C123-C134, C136-C145, C150-C160, C154-C166, and C168-C177. EGF-like domains are found at residues 81–112 (IVPICRHSCGDGFCSRPNMCTCPSGQIAPSCG), 115–146 (SIQHCNIRCMNGGSCSDDHCLCQKGYIGTHCG), and 147–178 (QPVCESGCLNGGRCVAPNRCACTYGFTGPQCE). An interaction with MFAP4 region spans residues 119–329 (CNIRCMNGGS…YTSPDGTRCI (211 aa)). Residues 184–236 (GPCFTVISNQMCQGQLSGIVCTKTLCCATVGRAWGHPCEMCPAQPHPCRRGFI) form the TB 1 domain. Positions 195 to 221 (CQGQLSGIVCTKTLCCATVGRAWGHPC) are hybrid domain 1. An EGF-like 4; calcium-binding domain is found at 246–287 (DVDECQAIPGLCQGGNCINTVGSFECKCPAGHKLNEVSQKCE). Cystine bridges form between C250-C262, C257-C271, C273-C286, C292-C304, C299-C313, and C315-C328. A glycan (O-linked (Glc) serine) is linked at S268. The 42-residue stretch at 288–329 (DIDECSTIPGICEGGECTNTVSSYFCKCPPGFYTSPDGTRCI) folds into the EGF-like 5; calcium-binding domain. The 56-residue stretch at 334-389 (GYCYTALTNGRCSNQLPQSITKMQCCCDAGRCWSPGVTVAPEMCPIRATEDFNKLC) folds into the TB 2 domain. N448 is a glycosylation site (N-linked (GlcNAc...) asparagine). One can recognise an EGF-like 6 domain in the interval 449–489 (VTDYCQLVRYLCQNGRCIPTPGSYRCECNKGFQLDLRGECI). Disulfide bonds link C453–C465, C460–C474, C476–C488, C494–C504, C499–C513, C515–C528, C534–C546, C541–C555, C557–C570, C576–C587, C582–C596, C598–C611, C617–C628, C623–C637, and C639–C652. O-linked (Glc) serine glycosylation is present at S471. Residues 490 to 529 (DVDECEKNPCAGGECINNQGSYTCQCRAGYQSTLTRTECR) enclose the EGF-like 7; calcium-binding domain. An O-linked (Glc) serine glycan is attached at S510. Residues 530 to 571 (DIDECLQNGRICNNGRCINTDGSFHCVCNAGFHVTRDGKNCE) form the EGF-like 8; calcium-binding domain. Residue S552 is glycosylated (O-linked (Glc) serine). The EGF-like 9; calcium-binding domain occupies 572–612 (DMDECSIRNMCLNGMCINEDGSFKCICKPGFQLASDGRYCK). O-linked (Glc) serine glycosylation is present at S593. In terms of domain architecture, EGF-like 10; calcium-binding spans 613–653 (DINECETPGICMNGRCVNTDGSYRCECFPGLAVGLDGRVCV). S634 carries an O-linked (Glc) serine glycan. Residues 659 to 711 (STCYGGYKRGQCIKPLFGAVTKSECCCASTEYAFGEPCQPCPAQNSAEYQALC) enclose the TB 3 domain. In terms of domain architecture, EGF-like 11; calcium-binding spans 723–764 (DINECALDPDICPNGICENLRGTYKCICNSGYEVDSTGKNCV). Cystine bridges form between C727–C739, C734–C748, C750–C763, C769–C781, C776–C790, C792–C805, C811–C821, C816–C830, C832–C845, C853–C875, C862–C887, C876–C890, C896–C908, C914–C926, C921–C935, and C937–C950. Residues 765 to 806 (DINECVLNSLLCDNGQCRNTPGSFVCTCPKGFIYKPDLKTCE) form the EGF-like 12; calcium-binding domain. S787 carries an O-linked (Glc) serine glycan. The 40-residue stretch at 807–846 (DIDECESSPCINGVCKNSPGSFICECSSESTLDPTKTICI) folds into the EGF-like 13; calcium-binding domain. A glycan (O-linked (Glc) serine) is linked at S827. Positions 851 to 902 (GTCWQTVIDGRCEININGATLKSQCCSSLGAAWGSPCTLCQVDPICGKGYSR) constitute a TB 4 domain. Positions 862 to 887 (CEININGATLKSQCCSSLGAAWGSPC) are hybrid domain 2. An EGF-like 14; calcium-binding domain is found at 910 to 951 (DIDECEVFPGVCKNGLCVNTRGSFKCQCPSGMTLDATGRICL). Residues 956–1008 (ETCFLRYEDEECTLPIAGRHRMDACCCSVGAAWGTEECEECPMRNTPEYEELC) enclose the TB 5 domain. The 42-residue stretch at 1028-1069 (DINECKMIPSLCTHGKCRNTIGSFKCRCDSGFALDSEERNCT) folds into the EGF-like 15; calcium-binding domain. 46 disulfides stabilise this stretch: C1032-C1044, C1039-C1053, C1055-C1068, C1074-C1086, C1081-C1095, C1097-C1111, C1117-C1129, C1124-C1138, C1140-C1153, C1159-C1171, C1166-C1180, C1182-C1195, C1201-C1212, C1208-C1221, C1223-C1236, C1242-C1254, C1249-C1263, C1265-C1278, C1284-C1296, C1291-C1305, C1307-C1320, C1326-C1339, C1333-C1348, C1350-C1361, C1367-C1380, C1374-C1389, C1391-C1402, C1408-C1420, C1415-C1429, C1431-C1444, C1450-C1461, C1456-C1470, C1472-C1485, C1491-C1502, C1497-C1511, C1513-C1526, C1534-C1562, C1549-C1574, C1563-C1577, C1564-C1589, C1610-C1622, C1617-C1631, C1633-C1646, C1652-C1663, C1658-C1672, and C1674-C1687. S1050 carries an O-linked (Glc) serine glycan. The N-linked (GlcNAc...) asparagine glycan is linked to N1067. Positions 1070–1112 (DIDECRISPDLCGRGQCVNTPGDFECKCDEGYESGFMMMKNCM) constitute an EGF-like 16; calcium-binding domain. Residues 1113 to 1154 (DIDECQRDPLLCRGGVCHNTEGSYRCECPPGHQLSPNISACI) form the EGF-like 17; calcium-binding domain. An O-linked (Glc) serine glycan is attached at S1135. N-linked (GlcNAc...) asparagine glycosylation occurs at N1149. The EGF-like 18; calcium-binding domain maps to 1155–1196 (DINECELSAHLCPNGRCVNLIGKYQCACNPGYHSTPDRLFCV). The region spanning 1197 to 1237 (DIDECSIMNGGCETFCTNSEGSYECSCQPGFALMPDQRSCT) is the EGF-like 19; calcium-binding domain. O-linked (Glc) serine glycosylation is present at S1218. In terms of domain architecture, EGF-like 20; calcium-binding spans 1238 to 1279 (DIDECEDNPNICDGGQCTNIPGEYRCLCYDGFMASEDMKTCV). The EGF-like 21; calcium-binding domain occupies 1280–1321 (DVNECDLNPNICLSGTCENTKGSFICHCDMGYSGKKGKTGCT). S1302 is a glycosylation site (O-linked (Glc) serine). The 41-residue stretch at 1322–1362 (DINECEIGAHNCGKHAVCTNTAGSFKCSCSPGWIGDGIKCT) folds into the EGF-like 22; calcium-binding domain. S1345 is a glycosylation site (O-linked (Glc) serine). An EGF-like 23; calcium-binding domain is found at 1363 to 1403 (DLDECSNGTHMCSQHADCKNTMGSYRCLCKEGYTGDGFTCT). N1369 carries N-linked (GlcNAc...) asparagine glycosylation. S1386 carries O-linked (Glc) serine glycosylation. The 42-residue stretch at 1404-1445 (DLDECSENLNLCGNGQCLNAPGGYRCECDMGFVPSADGKACE) folds into the EGF-like 24; calcium-binding domain. An EGF-like 25; calcium-binding domain is found at 1446-1486 (DIDECSLPNICVFGTCHNLPGLFRCECEIGYELDRSGGNCT). N1484 carries N-linked (GlcNAc...) asparagine glycosylation. The EGF-like 26; calcium-binding domain occupies 1487-1527 (DVNECLDPTTCISGNCVNTPGSYICDCPPDFELNPTRVGCV). O-linked (Glc) serine glycosylation is present at S1508. Positions 1528-2731 (DTRSGNCYLD…GYPKRGRKRR (1204 aa)) are C-terminal domain. A TB 6 domain is found at 1532-1589 (GNCYLDIRPRGDNGDTACSNEIGVGVSKASCCCSLGKAWGTPCEMCPAVNTSEYKILC). The Cell attachment site motif lies at 1541 to 1543 (RGD). N-linked (GlcNAc...) asparagine glycosylation occurs at N1581. In terms of domain architecture, EGF-like 27; calcium-binding spans 1606-1647 (DIDECQELPGLCQGGKCINTFGSFQCRCPTGYYLNEDTRVCD). S1628 is a glycosylation site (O-linked (Glc) serine). In terms of domain architecture, EGF-like 28; calcium-binding spans 1648-1688 (DVNECETPGICGPGTCYNTVGNYTCICPPDYMQVNGGNNCM). N-linked (GlcNAc...) asparagine glycosylation is present at N1669. Residues 1693-1748 (SLCYRNYYADNQTCDGELLFNMTKKMCCCSYNIGRAWNKPCEQCPIPSTDEFATLC) enclose the TB 7 domain. N-linked (GlcNAc...) asparagine glycosylation is found at N1703 and N1713. An EGF-like 29; calcium-binding domain is found at 1766-1807 (DIDECREIPGVCENGVCINMVGSFRCECPVGFFYNDKLLVCE). 40 disulfide bridges follow: C1770-C1782, C1777-C1791, C1793-C1806, C1812-C1824, C1818-C1833, C1835-C1847, C1853-C1865, C1860-C1874, C1876-C1889, C1895-C1905, C1900-C1914, C1916-C1928, C1934-C1947, C1942-C1956, C1958-C1971, C1977-C1989, C1984-C1998, C2000-C2011, C2017-C2029, C2024-C2038, C2040-C2053, C2061-C2083, C2070-C2096, C2084-C2099, C2085-C2111, C2131-C2142, C2137-C2151, C2153-C2164, C2170-C2181, C2176-C2190, C2192-C2204, C2210-C2221, C2217-C2230, C2232-C2245, C2251-C2265, C2258-C2274, C2276-C2289, C2295-C2307, C2302-C2316, and C2318-C2331. Positions 1808-1848 (DIDECQNGPVCQRNAECINTAGSYRCDCKPGYRFTSTGQCN) constitute an EGF-like 30; calcium-binding domain. S1830 carries an O-linked (Glc) serine glycan. The 42-residue stretch at 1849–1890 (DRNECQEIPNICSHGQCIDTVGSFYCLCHTGFKTNDDQTMCL) folds into the EGF-like 31; calcium-binding domain. O-linked (Glc) serine glycosylation occurs at S1871. The EGF-like 32; calcium-binding domain occupies 1891–1929 (DINECERDACGNGTCRNTIGSFNCRCNHGFILSHNNDCI). N-linked (GlcNAc...) asparagine glycosylation is present at N1902. O-linked (Glc) serine glycosylation is present at S1911. Residues 1930–1972 (DVDECASGNGNLCRNGQCINTVGSFQCQCNEGYEVAPDGRTCV) form the EGF-like 33; calcium-binding domain. A glycan (O-linked (Glc) serine) is linked at S1953. Positions 1973–2012 (DINECLLEPRKCAPGTCQNLDGSYRCICPPGYSLQNEKCE) constitute an EGF-like 34; calcium-binding domain. The 42-residue stretch at 2013–2054 (DIDECVEEPEICALGTCSNTEGSFKCLCPEGFSLSSSGRRCQ) folds into the EGF-like 35; calcium-binding domain. S2035 carries O-linked (Glc) serine glycosylation. The TB 8 domain maps to 2059–2111 (SYCYAKFEGGKCSSPKSRNHSKQECCCALKGEGWGDPCELCPTEPDEAFRQIC). N-linked (GlcNAc...) asparagine glycosylation is present at N2077. The EGF-like 36; calcium-binding domain occupies 2127–2165 (DMDECKEPDVCKHGQCINTDGSYRCECPFGYILAGNECV). S2148 carries O-linked (Glc) serine glycosylation. Residues 2166-2205 (DTDECSVGNPCGNGTCKNVIGGFECTCEEGFEPGPMMTCE) form the EGF-like 37; calcium-binding domain. N-linked (GlcNAc...) asparagine glycosylation is present at N2178. Residues 2206 to 2246 (DINECAQNPLLCAFRCVNTYGSYECKCPVGYVLREDRRMCK) form the EGF-like 38; calcium-binding domain. O-linked (Glc) serine glycosylation occurs at S2227. The EGF-like 39; calcium-binding domain maps to 2247–2290 (DEDECEEGKHDCTEKQMECKNLIGTYMCICGPGYQRRPDGEGCV). Residues 2291 to 2332 (DENECQTKPGICENGRCLNTRGSYTCECNDGFTASPNQDECL) form the EGF-like 40; calcium-binding domain. Residue S2313 is glycosylated (O-linked (Glc) serine). The 54-residue stretch at 2337 to 2390 (GYCFTEVLQNMCQIGSSNRNPVTKSECCCDGGRGWGPHCEICPFQGTVAFKKLC) folds into the TB 9 domain. The EGF-like 41; calcium-binding domain occupies 2402–2443 (DIDECKVIHDVCRNGECVNDRGSYHCICKTGYTPDITGTSCV). Intrachain disulfides connect C2406/C2418, C2413/C2427, C2429/C2442, C2448/C2459, C2455/C2468, C2470/C2483, C2489/C2500, C2496/C2509, C2511/C2522, C2528/C2541, C2535/C2550, C2552/C2565, C2571/C2581, C2577/C2590, C2592/C2605, C2611/C2622, C2617/C2631, C2633/C2646, C2652/C2663, C2659/C2672, and C2674/C2686. Residues 2444–2484 (DLNECNQAPKPCNFICKNTEGSYQCSCPKGYILQEDGRSCK) enclose the EGF-like 42; calcium-binding domain. S2465 is a glycosylation site (O-linked (Glc) serine). The region spanning 2485–2523 (DLDECATKQHNCQFLCVNTIGGFTCKCPPGFTQHHTSCI) is the EGF-like 43; calcium-binding domain. In terms of domain architecture, EGF-like 44; calcium-binding spans 2524-2566 (DNNECTSDINLCGSKGICQNTPGSFTCECQRGFSLDQTGSSCE). S2547 carries an O-linked (Glc) serine glycan. Residues 2567-2606 (DVDECEGNHRCQHGCQNIIGGYRCSCPQGYLQHYQWNQCV) form the EGF-like 45; calcium-binding domain. An EGF-like 46; calcium-binding domain is found at 2607-2647 (DENECLSAHICGGASCHNTLGSYKCMCPAGFQYEQFSGGCQ). The O-linked (Glc) serine glycan is linked to S2628. Residues 2648-2687 (DINECGSAQAPCSYGCSNTEGGYLCGCPPGYFRIGQGHCV) form the EGF-like 47; calcium-binding domain. Residue S2702 is modified to Phosphoserine; by FAM20C. S2709 carries the phosphoserine modification. The disordered stretch occupies residues 2726–2746 (RGRKRRSTNETDASNIEDQSE). A glycan (N-linked (GlcNAc...) asparagine) is linked at N2734. Residues 2735 to 2746 (ETDASNIEDQSE) show a composition bias toward polar residues. N-linked (GlcNAc...) asparagine glycans are attached at residues N2750 and N2767.

The protein belongs to the fibrillin family. In terms of assembly, interacts with COL16A1. Interacts with integrin alpha-V/beta-3. Interacts with ADAMTS10; this interaction promotes microfibril assembly. Interacts with THSD4; this interaction promotes fibril formation. Interacts (via N-terminal domain) with FBLN2 and FBLN5. Interacts with ELN. Forms a ternary complex with ELN and FBLN2 or FBLN5 and a significant interaction with ELN seen only in the presence of FBLN2 or FBLN5. Interacts (via N-terminal domain) with LTBP2 (via C-terminal domain) in a Ca(+2)-dependent manner. Interacts (via N-terminal domain) with LTBP1 (via C-terminal domain). Interacts with integrins ITGA5:ITGB1, ITGAV:ITGB3 and ITGAV:ITGB6. Interacts (via N-terminal domain) with BMP2, BMP4, BMP7, BMP10 and GDF5. Interacts (via N-terminal domain) with MFAP2 and MFAP5. Interacts with ADAMTSL5. Interacts with MFAP4. Interacts (via N-terminal domain) with TNFSF11 in a Ca(+2)-dependent manner. Interacts (via N-terminal domain) with EFEMP2; this interaction inhibits EFEMP2 binding to LOX and ELN. In terms of processing, cleavage of N- and C-terminus by furin is required for incorporation into the extracellular matrix and assembly into microfibrils. The C-terminus, which corresponds to the Asprosin chain, was initially thought to constitute a propeptide. Fibrillin-1 and Asprosin chains are still linked together during the secretion from cells, but are subsequently separated by furin, an essential step for incorporation of Fibrillin-1 into the nascent microfibrils. Forms intermolecular disulfide bonds either with other fibrillin-1 molecules or with other components of the microfibrils. Post-translationally, O-glycosylated on serine residues by POGLUT2 and POGLUT3 which is necessary for efficient protein secretion.

It localises to the secreted. The protein resides in the extracellular space. It is found in the extracellular matrix. Structural component of the 10-12 nm diameter microfibrils of the extracellular matrix, which conveys both structural and regulatory properties to load-bearing connective tissues. Fibrillin-1-containing microfibrils provide long-term force bearing structural support. In tissues such as the lung, blood vessels and skin, microfibrils form the periphery of the elastic fiber, acting as a scaffold for the deposition of elastin. In addition, microfibrils can occur as elastin-independent networks in tissues such as the ciliary zonule, tendon, cornea and glomerulus where they provide tensile strength and have anchoring roles. Fibrillin-1 also plays a key role in tissue homeostasis through specific interactions with growth factors, such as the bone morphogenetic proteins (BMPs), growth and differentiation factors (GDFs) and latent transforming growth factor-beta-binding proteins (LTBPs), cell-surface integrins and other extracellular matrix protein and proteoglycan components. Regulates osteoblast maturation by controlling TGF-beta bioavailability and calibrating TGF-beta and BMP levels, respectively. Negatively regulates osteoclastogenesis by binding and sequestering an osteoclast differentiation and activation factor TNFSF11. This leads to disruption of TNFSF11-induced Ca(2+) signaling and impairment of TNFSF11-mediated nuclear translocation and activation of transcription factor NFATC1 which regulates genes important for osteoclast differentiation and function. Mediates cell adhesion via its binding to cell surface receptors integrins ITGAV:ITGB3 and ITGA5:ITGB1. Binds heparin and this interaction has an important role in the assembly of microfibrils. In terms of biological role, adipokine secreted by white adipose tissue that plays an important regulatory role in the glucose metabolism of liver, muscle and pancreas. Hormone that targets the liver in response to fasting to increase plasma glucose levels. Binds the olfactory receptor OR4M1 at the surface of hepatocytes and promotes hepatocyte glucose release by activating the protein kinase A activity in the liver, resulting in rapid glucose release into the circulation. May act as a regulator of adaptive thermogenesis by inhibiting browning and energy consumption, while increasing lipid deposition in white adipose tissue. Also acts as an orexigenic hormone that increases appetite: crosses the blood brain barrier and exerts effects on the hypothalamus. In the arcuate nucleus of the hypothalamus, asprosin directly activates orexigenic AgRP neurons and indirectly inhibits anorexigenic POMC neurons, resulting in appetite stimulation. Activates orexigenic AgRP neurons via binding to the olfactory receptor OR4M1. May also play a role in sperm motility in testis via interaction with OR4M1 receptor. This Homo sapiens (Human) protein is Fibrillin-1.